Consider the following 205-residue polypeptide: Large ribosomal subunit protein uL4 (205 aa).

Residues 56–76 (VSGTTAKPYRQKHTGRARQGS) are disordered.

Belongs to the universal ribosomal protein uL4 family. In terms of assembly, part of the 50S ribosomal subunit.

Its function is as follows. One of the primary rRNA binding proteins, this protein initially binds near the 5'-end of the 23S rRNA. It is important during the early stages of 50S assembly. It makes multiple contacts with different domains of the 23S rRNA in the assembled 50S subunit and ribosome. Forms part of the polypeptide exit tunnel. The sequence is that of Large ribosomal subunit protein uL4 from Ehrlichia ruminantium (strain Welgevonden).